The chain runs to 95 residues: MADDKPKEGVKTENNDHINLKVAGQDGSVVQFKIKRHTPLNKLMKAYCERQGLSMRQIRFRFDGQPINETDTPAQLEMEDEDTIDVFQQQTGGSF.

K11 participates in a covalent cross-link: Glycyl lysine isopeptide (Lys-Gly) (interchain with G-Cter in SUMO). Positions 16-95 (DHINLKVAGQ…VFQQQTGGSF (80 aa)) constitute a Ubiquitin-like domain. G93 participates in a covalent cross-link: Glycyl lysine isopeptide (Gly-Lys) (interchain with K-? in acceptor proteins). Positions 94–95 (SF) are excised as a propeptide.

This sequence belongs to the ubiquitin family. SUMO subfamily. In terms of assembly, interacts with sae2 and ube2i. Covalently attached to a number of proteins, including top2. Post-translationally, polymeric chains can be formed through Lys-11 cross-linking. Cleavage of precursor form by a sentrin-specific protease is necessary for function.

The protein localises to the nucleus. In terms of biological role, ubiquitin-like protein that can be covalently attached to proteins as a monomer or as a lysine-linked polymer. Covalent attachment via an isopeptide bond to its substrates requires prior activation by the E1 complex sae1-sae2 and linkage to the E2 enzyme ube2i, and can be promoted by an E3 ligase such as pias1-4. This post-translational modification on lysine residues of proteins plays a crucial role in a number of cellular processes such as nuclear transport, DNA replication and repair, mitosis and signal transduction. Polymeric sumo2 chains are also susceptible to polyubiquitination which functions as a signal for proteasomal degradation of modified proteins. The chain is Small ubiquitin-related modifier 2 (sumo2) from Xenopus tropicalis (Western clawed frog).